A 336-amino-acid polypeptide reads, in one-letter code: Phospho-N-acetylmuramoyl-pentapeptide-transferase (336 aa).

10 consecutive transmembrane segments (helical) span residues 3-23, 53-73, 78-98, 118-138, 143-163, 174-194, 200-220, 226-246, 254-274, and 316-336; these read LTLI…PYFI, GGTV…LFSI, SLAL…IGFL, LALQ…PSGI, VFGY…FWVV, GIDG…GVIA, FDVL…FCFN, VFMG…ISIA, LIIG…VFYF, and AFLW…LYVF.

This sequence belongs to the glycosyltransferase 4 family. MraY subfamily. The cofactor is Mg(2+).

The protein resides in the cell membrane. It catalyses the reaction UDP-N-acetyl-alpha-D-muramoyl-L-alanyl-gamma-D-glutamyl-L-lysyl-D-alanyl-D-alanine + di-trans,octa-cis-undecaprenyl phosphate = Mur2Ac(oyl-L-Ala-gamma-D-Glu-L-Lys-D-Ala-D-Ala)-di-trans,octa-cis-undecaprenyl diphosphate + UMP. It participates in cell wall biogenesis; peptidoglycan biosynthesis. In terms of biological role, catalyzes the initial step of the lipid cycle reactions in the biosynthesis of the cell wall peptidoglycan: transfers peptidoglycan precursor phospho-MurNAc-pentapeptide from UDP-MurNAc-pentapeptide onto the lipid carrier undecaprenyl phosphate, yielding undecaprenyl-pyrophosphoryl-MurNAc-pentapeptide, known as lipid I. This is Phospho-N-acetylmuramoyl-pentapeptide-transferase from Streptococcus pyogenes serotype M18 (strain MGAS8232).